We begin with the raw amino-acid sequence, 128 residues long: MDPVMGIIAVALGGAVGSLARYAIALGTQKIAHAFPFGTFIANLAGCLFIGLLWSFFEKIHISHTFRLFLFTGLLGGLTTFSTFSRETYGFFETGEYWQGFGYLFLSISLGLAMVAVGFFISHKFLLR.

4 helical membrane passes run 4–24, 37–57, 65–85, and 101–121; these read VMGI…RYAI, FGTF…WSFF, TFRL…STFS, and FGYL…GFFI. 2 residues coordinate Na(+): glycine 76 and threonine 79.

This sequence belongs to the fluoride channel Fluc/FEX (TC 1.A.43) family.

Its subcellular location is the cell inner membrane. It catalyses the reaction fluoride(in) = fluoride(out). Na(+) is not transported, but it plays an essential structural role and its presence is essential for fluoride channel function. In terms of biological role, fluoride-specific ion channel. Important for reducing fluoride concentration in the cell, thus reducing its toxicity. The protein is Fluoride-specific ion channel FluC of Desulfotalea psychrophila (strain LSv54 / DSM 12343).